The chain runs to 577 residues: Phosphoethanolamine transferase EptC (577 aa).

Transmembrane regions (helical) follow at residues 17–37, 44–64, 69–89, 119–139, and 154–174; these read LGWA…IIYI, NGIR…FLFP, IIAA…LCYY, YFSL…VLLW, and VVSF…NTFI.

The protein belongs to the phosphoethanolamine transferase family. EptC/CptA subfamily.

It localises to the cell inner membrane. The protein operates within bacterial outer membrane biogenesis; LPS core biosynthesis. Functionally, catalyzes the addition of a phosphoethanolamine moiety to the outer membrane lipopolysaccharide core. Plays a role in the pathogenesis of E.coli meningitis. Required for invasion of E.coli K1 into brain microvascular endothelial cells (BMEC). Contributes to E.coli traversal across the blood-brain barrier. The protein is Phosphoethanolamine transferase EptC (eptC) of Escherichia coli O18:K1:H7 (strain RS218 / NMEC).